An 81-amino-acid chain; its full sequence is Defensin-like protein b (81 aa).

Residues 1–26 (MRNATFFIVFYVFISLVLSNVQDVTA) form the signal peptide. Cystine bridges form between Cys-31-Cys-81, Cys-42-Cys-66, Cys-50-Cys-76, and Cys-64-Cys-78.

This sequence belongs to the DEFL family. Expressed in microspores and in young and mature anthers.

The protein localises to the secreted. Its function is as follows. Involved in self-incompatibility. This is Defensin-like protein b (SCRb-1) from Arabidopsis lyrata (Lyre-leaved rock-cress).